Reading from the N-terminus, the 119-residue chain is Large ribosomal subunit protein bL20 (119 aa).

The protein belongs to the bacterial ribosomal protein bL20 family.

Binds directly to 23S ribosomal RNA and is necessary for the in vitro assembly process of the 50S ribosomal subunit. It is not involved in the protein synthesizing functions of that subunit. The sequence is that of Large ribosomal subunit protein bL20 from Dichelobacter nodosus (strain VCS1703A).